A 379-amino-acid chain; its full sequence is Guanine nucleotide-binding protein subunit alpha-12 (379 aa).

Cys-11 carries the S-palmitoyl cysteine lipid modification. The region spanning 54–379 (RLVKILLLGA…QENLKDIMLQ (326 aa)) is the G-alpha domain. The segment at 57–70 (KILLLGAGESGKST) is G1 motif. GTP-binding positions include 65–70 (ESGKST) and 200–203 (LLAR). Ser-69 provides a ligand contact to Mg(2+). The segment at 198-206 (DILLARKAT) is G2 motif. Thr-206 contributes to the Mg(2+) binding site. Thr-206 is subject to Phosphothreonine. The G3 motif stretch occupies residues 221–230 (FKMVDVGGQR). The segment at 290–297 (ILFLNKMD) is G4 motif. Residues 294-297 (NKMD) and Ala-351 contribute to the GTP site. The tract at residues 349–354 (TTAIDT) is G5 motif.

This sequence belongs to the G-alpha family. G(12) subfamily. In terms of assembly, g proteins are composed of 3 units; alpha, beta and gamma. The alpha chain contains the guanine nucleotide binding site. Interacts with UBXD5. Interacts (in GTP-bound form) with PPP5C (via TPR repeats); activates PPP5C phosphatase activity and translocates PPP5C to the cell membrane. Interacts with RGS22. Interacts (via N-terminus) with NAPA; the interaction promotes CDH5 localization to plasma membrane. Interacts with CTNND1 (via N-terminus); the interaction regulates CDH1-mediated cell-cell adhesion. Interacts with PPP2R1A; the interaction promotes protein phosphatase 2A activation causing dephosphorylation of MAPT. Interacts (in GTP-bound form) with ARHGEF1. Interacts (in GTP-bound form) with ARHGEF11 (via RGS domain). Interacts (in GTP-bound form) with ARHGEF12 (via RGS domain).

It localises to the cell membrane. It is found in the lateral cell membrane. The protein resides in the cytoplasm. Its function is as follows. Guanine nucleotide-binding proteins (G proteins) are involved as modulators or transducers in various transmembrane signaling systems. Activates effector molecule RhoA by binding and activating RhoGEFs (ARHGEF12/LARG). GNA12-dependent Rho signaling subsequently regulates transcription factor AP-1 (activating protein-1). GNA12-dependent Rho signaling also regulates protein phosphatese 2A activation causing dephosphorylation of its target proteins. Promotes tumor cell invasion and metastasis by activating RhoA/ROCK signaling pathway and up-regulating pro-inflammatory cytokine production. Inhibits CDH1-mediated cell adhesion in process independent from Rho activation. Together with NAPA promotes CDH5 localization to plasma membrane. May play a role in the control of cell migration through the TOR signaling cascade. In Rattus norvegicus (Rat), this protein is Guanine nucleotide-binding protein subunit alpha-12 (Gna12).